The chain runs to 731 residues: Catalase-peroxidase (731 aa).

Residues 1–23 (MSDLKCPFSGHTGAVTPAGNTNN) are disordered. The segment at residues 95 to 218 (WHSAGTYRTG…LAAVEMGLIY (124 aa)) is a cross-link (tryptophyl-tyrosyl-methioninium (Trp-Tyr) (with M-244)). The active-site Proton acceptor is His-96. The segment at residues 218–244 (YVNPEGPHGEPDPVASGRDVRETFARM) is a cross-link (tryptophyl-tyrosyl-methioninium (Tyr-Met) (with W-95)). Position 259 (His-259) interacts with heme b.

Belongs to the peroxidase family. Peroxidase/catalase subfamily. As to quaternary structure, homodimer or homotetramer. It depends on heme b as a cofactor. In terms of processing, formation of the three residue Trp-Tyr-Met cross-link is important for the catalase, but not the peroxidase activity of the enzyme.

The catalysed reaction is H2O2 + AH2 = A + 2 H2O. It carries out the reaction 2 H2O2 = O2 + 2 H2O. Its function is as follows. Bifunctional enzyme with both catalase and broad-spectrum peroxidase activity. This is Catalase-peroxidase from Synechococcus sp. (strain WH7803).